Reading from the N-terminus, the 503-residue chain is Potassium voltage-gated channel subfamily V member 1 (503 aa).

At 1–213 the chain is on the cytoplasmic side; the sequence is MELLPPRGRA…EKPGSCTAAR (213 aa). A helical transmembrane segment spans residues 214–234; the sequence is IFGVISIIFVAVSIVNMALMS. Over 235–246 the chain is Extracellular; sequence AELSWLDPQLLE. Residues 247–267 traverse the membrane as a helical segment; it reads ILEYVCISWFTGEFVLRFLCV. Topologically, residues 268-279 are cytoplasmic; that stretch reads RDRCRFLRKVPN. Residues 280-300 traverse the membrane as a helical segment; it reads IIDLLAILPFYITLLVESLSG. At 301–312 the chain is on the extracellular side; that stretch reads SQTTQELENVGR. Residues 313–334 traverse the membrane as a helical; Voltage-sensor segment; that stretch reads IVQVLRLLRALRMLKLGRHSTG. Over 335-348 the chain is Cytoplasmic; it reads LRSLGMTITQCYEE. Residues 349-369 traverse the membrane as a helical segment; the sequence is VGLLLLFLSVGISIFSTVEYF. Residues 395-400 carry the Selectivity filter motif; the sequence is TVGYGD. A helical transmembrane segment spans residues 410 to 430; that stretch reads IVAFMCILSGILVLALPIAII. The Cytoplasmic portion of the chain corresponds to 431 to 503; the sequence is NDRFSACYFT…RSSGGDDFWF (73 aa).

The protein belongs to the potassium channel family. V (TC 1.A.1.2) subfamily. Kv8.1/KCNV1 sub-subfamily. As to quaternary structure, heteromultimer with KCNB1 and KCNB2. Interacts with KCNC4 and KCND1.

It localises to the cell membrane. Functionally, potassium channel subunit that does not form functional channels by itself. Modulates KCNB1 and KCNB2 channel activity by shifting the threshold for inactivation to more negative values and by slowing the rate of inactivation. Can down-regulate the channel activity of KCNB1, KCNB2, KCNC4 and KCND1, possibly by trapping them in intracellular membranes. This Bos taurus (Bovine) protein is Potassium voltage-gated channel subfamily V member 1 (KCNV1).